The chain runs to 391 residues: Flagellin (391 aa).

Belongs to the bacterial flagellin family.

Its subcellular location is the secreted. The protein localises to the bacterial flagellum. Flagellin is the subunit protein which polymerizes to form the filaments of bacterial flagella. The chain is Flagellin (flaA) from Bordetella bronchiseptica (strain ATCC BAA-588 / NCTC 13252 / RB50) (Alcaligenes bronchisepticus).